Here is a 173-residue protein sequence, read N- to C-terminus: Co-chaperone protein HscB (173 aa).

Residues 2 to 74 (DYFTLLGMPN…LSRAEYMLSL (73 aa)) form the J domain.

This sequence belongs to the HscB family. Interacts with HscA and stimulates its ATPase activity. Interacts with IscU.

Functionally, co-chaperone involved in the maturation of iron-sulfur cluster-containing proteins. Seems to help targeting proteins to be folded toward HscA. The protein is Co-chaperone protein HscB of Proteus mirabilis (strain HI4320).